Reading from the N-terminus, the 455-residue chain is GTPase Der (455 aa).

2 consecutive EngA-type G domains span residues 3–167 (FTIA…PEPA) and 184–359 (IRVA…AVWN). Residues 9–16 (GRPNVGKS), 56–60 (DTAGL), 119–122 (NKSE), 190–197 (GRPNAGKS), 237–241 (DTAGL), and 302–305 (NKWD) contribute to the GTP site. Positions 360–444 (RRVATALLNR…PIRITLREKA (85 aa)) constitute a KH-like domain.

The protein belongs to the TRAFAC class TrmE-Era-EngA-EngB-Septin-like GTPase superfamily. EngA (Der) GTPase family. As to quaternary structure, associates with the 50S ribosomal subunit.

In terms of biological role, GTPase that plays an essential role in the late steps of ribosome biogenesis. This is GTPase Der from Nitrobacter winogradskyi (strain ATCC 25391 / DSM 10237 / CIP 104748 / NCIMB 11846 / Nb-255).